The following is a 32-amino-acid chain: Hemocyanin C chain (32 aa).

It belongs to the tyrosinase family. Hemocyanin subfamily. In terms of tissue distribution, hemolymph.

It is found in the secreted. The protein resides in the extracellular space. Functionally, hemocyanins are copper-containing oxygen carriers occurring freely dissolved in the hemolymph of many mollusks and arthropods. This is Hemocyanin C chain from Cherax destructor (Common yabby crayfish).